Here is a 401-residue protein sequence, read N- to C-terminus: Carboxybiotin decarboxylase (401 aa).

Helical transmembrane passes span 20–40 (VISITRIALIIFGFFLSYFGF), 46–66 (PLIMVPMGLGMIAINAGVLFL), 70–90 (VVGTIHLDPLVSEPSVLVNLM), 107–127 (LIACIVFFGIGAMSDISFILI), 131–151 (ASIIVALFAEMGTFATLIIGI), 173–193 (MVLFASLILAKDLFVPIAIIA), 244–264 (LCLLLPVASPLILSFFLGIAI), 275–295 (LLETTLTYGSTLFLGLLLGAL), 306–326 (ISLIVVLGITALLISGIGGVL), and 380–400 (VCGLIVSAIATGVFISTLFLL).

Its subcellular location is the cell membrane. It catalyses the reaction N(6)-carboxybiotinyl-L-lysyl-[protein] + n Na(+)(in) + H(+) = N(6)-biotinyl-L-lysyl-[protein] + n Na(+)(out) + CO2. Beta subunit of the biotin-dependent malonate decarboxylase multienzyme complex (EC 7.2.4.4). Acts as an integral membrane-bound carboxybiotin protein decarboxylase by releasing the carboxyl group of the carboxylated biotin carrier MADF. The free energy of the decarboxylation reaction is used to pump Na(+) out of the cell. This is Carboxybiotin decarboxylase (madB) from Malonomonas rubra.